Consider the following 150-residue polypeptide: D-aminoacyl-tRNA deacylase (150 aa).

The Gly-cisPro motif, important for rejection of L-amino acids motif lies at 138–139 (GP).

It belongs to the DTD family. As to quaternary structure, homodimer.

It is found in the cytoplasm. The catalysed reaction is glycyl-tRNA(Ala) + H2O = tRNA(Ala) + glycine + H(+). It carries out the reaction a D-aminoacyl-tRNA + H2O = a tRNA + a D-alpha-amino acid + H(+). An aminoacyl-tRNA editing enzyme that deacylates mischarged D-aminoacyl-tRNAs. Also deacylates mischarged glycyl-tRNA(Ala), protecting cells against glycine mischarging by AlaRS. Acts via tRNA-based rather than protein-based catalysis; rejects L-amino acids rather than detecting D-amino acids in the active site. By recycling D-aminoacyl-tRNA to D-amino acids and free tRNA molecules, this enzyme counteracts the toxicity associated with the formation of D-aminoacyl-tRNA entities in vivo and helps enforce protein L-homochirality. This Chlorobaculum tepidum (strain ATCC 49652 / DSM 12025 / NBRC 103806 / TLS) (Chlorobium tepidum) protein is D-aminoacyl-tRNA deacylase.